A 257-amino-acid polypeptide reads, in one-letter code: tRNA (cytidine/uridine/adenosine-2'-O-)-methyltransferase TrmJ (257 aa).

S-adenosyl-L-methionine-binding positions include 79–82, 115–117, Ile-135, and 142–144; these read TSAR, GRE, and GSL.

It belongs to the class IV-like SAM-binding methyltransferase superfamily. RNA methyltransferase TrmH family. Homodimer.

The protein localises to the cytoplasm. The catalysed reaction is cytidine(32) in tRNA + S-adenosyl-L-methionine = 2'-O-methylcytidine(32) in tRNA + S-adenosyl-L-homocysteine + H(+). It carries out the reaction uridine(32) in tRNA + S-adenosyl-L-methionine = 2'-O-methyluridine(32) in tRNA + S-adenosyl-L-homocysteine + H(+). The enzyme catalyses adenosine(32) in tRNA + S-adenosyl-L-methionine = 2'-O-methyladenosine(32) in tRNA + S-adenosyl-L-homocysteine + H(+). Its function is as follows. Catalyzes the formation of 2'O-methylated cytidine (Cm32), 2'O-methylated uridine (Um32) or 2'O-methylated adenosine (Am32) at position 32 in tRNA. Confers resistance to oxidative stress. The sequence is that of tRNA (cytidine/uridine/adenosine-2'-O-)-methyltransferase TrmJ from Pseudomonas aeruginosa (strain UCBPP-PA14).